The primary structure comprises 443 residues: 5-methylthioadenosine/S-adenosylhomocysteine deaminase (443 aa).

Zn(2+) contacts are provided by H74 and H76. The substrate site is built by E103 and H196. H223 serves as a coordination point for Zn(2+). Residues E226 and D311 each coordinate substrate. Residue D311 participates in Zn(2+) binding.

This sequence belongs to the metallo-dependent hydrolases superfamily. MTA/SAH deaminase family. It depends on Zn(2+) as a cofactor.

It catalyses the reaction S-adenosyl-L-homocysteine + H2O + H(+) = S-inosyl-L-homocysteine + NH4(+). The enzyme catalyses S-methyl-5'-thioadenosine + H2O + H(+) = S-methyl-5'-thioinosine + NH4(+). Catalyzes the deamination of 5-methylthioadenosine and S-adenosyl-L-homocysteine into 5-methylthioinosine and S-inosyl-L-homocysteine, respectively. Is also able to deaminate adenosine. The protein is 5-methylthioadenosine/S-adenosylhomocysteine deaminase of Haloquadratum walsbyi (strain DSM 16790 / HBSQ001).